A 239-amino-acid polypeptide reads, in one-letter code: Tetraspanin-9 (239 aa).

The Cytoplasmic portion of the chain corresponds to 1–13 (MARGCLCCLKYTM). The helical transmembrane segment at 14–34 (FLFNLIFWLCGCGLLGVGIWL) threads the bilayer. Topologically, residues 35–55 (SVSQGNFATFSPSFPSLSAAN) are extracellular. A helical membrane pass occupies residues 56 to 76 (LVIAIGTIVMVTGFLGCLGAI). The Cytoplasmic segment spans residues 77 to 85 (KENKCLLLS). The helical transmembrane segment at 86–106 (FFIVLLIILLAELILIILFFV) threads the bilayer. At 107-203 (YMDKVNENAK…VKLWFDDNKH (97 aa)) the chain is on the extracellular side. Asn-180 is a glycosylation site (N-linked (GlcNAc...) asparagine). Residues 204–224 (VLGTVGMCILIMQILGMAFSM) form a helical membrane-spanning segment. The Cytoplasmic segment spans residues 225–239 (TLFQHIHRTGKKYDA).

This sequence belongs to the tetraspanin (TM4SF) family. In terms of assembly, found in a complex with GP6. Post-translationally, glycosylated. Strongly expressed in megakaryocytes, platelets and lung. Weakly expressed in bone marrow, brain and kidney (at protein level).

The protein resides in the membrane. The sequence is that of Tetraspanin-9 (Tspan9) from Mus musculus (Mouse).